The primary structure comprises 414 residues: MDAVILCAGSGTRLYPITENRPKPMIPIAGKPILEHIIEKIENHVEKIYLVVGFEKEKIIDYFYGNEKIEFIVQEKQLGTGHAVLMAKNYIKGDFLVLNGDVIFESDILEFLNYENAVGLSKVDNPENFGVIELGYDNKVINLLEKPNEDEIKSKFTSNLINAGIYKLENFVFEILENLLPSERGEIELTDALKKLIESSKLYGIELNGYWNDIGRPWDVLSANNYFLKNIMPKISGNIENNVTITGNVIIEEGVTVKSNSVIEGPVIIKSGAFIGPLAYIRPNTVLMEDTFVGNSSEIKGSIIMKNTKIPHLSYVGDSIIGSDCNFGCNTITANLRFDDEPVTLNIKGTKVKSVRKFGAVIGDNVKTGIQVSLMPGVKVGSNSIIGANCLVDKDIEKESFVYKKDELIIKKRN.

Positions 1–208 (MDAVILCAGS…SSKLYGIELN (208 aa)) are pyrophosphorylase. UTP is bound by residues 6 to 9 (LCAG), Gln-74, and Gly-79. Positions 80, 130, 142, and 162 each coordinate N-acetyl-alpha-D-glucosamine 1-phosphate. Positions 209-228 (GYWNDIGRPWDVLSANNYFL) are linker. The interval 229–414 (KNIMPKISGN…KDELIIKKRN (186 aa)) is N-acetyltransferase. The active-site Proton acceptor is the His-312. Acetyl-CoA-binding residues include Ala-388 and Lys-405.

It in the N-terminal section; belongs to the N-acetylglucosamine-1-phosphate uridyltransferase family. In the C-terminal section; belongs to the transferase hexapeptide repeat family.

The catalysed reaction is N-acetyl-alpha-D-glucosamine 1-phosphate + UTP + H(+) = UDP-N-acetyl-alpha-D-glucosamine + diphosphate. The enzyme catalyses alpha-D-glucosamine 1-phosphate + acetyl-CoA = N-acetyl-alpha-D-glucosamine 1-phosphate + CoA + H(+). Its pathway is nucleotide-sugar biosynthesis; UDP-N-acetyl-alpha-D-glucosamine biosynthesis; N-acetyl-alpha-D-glucosamine 1-phosphate from alpha-D-glucosamine 6-phosphate (route II): step 2/2. It participates in nucleotide-sugar biosynthesis; UDP-N-acetyl-alpha-D-glucosamine biosynthesis; UDP-N-acetyl-alpha-D-glucosamine from N-acetyl-alpha-D-glucosamine 1-phosphate: step 1/1. In terms of biological role, catalyzes the last two sequential reactions in the de novo biosynthetic pathway for UDP-N-acetyl-glucosamine (UDP-GlcNAc). Responsible for the acetylation of GlcN-1-P to GlcNAc-1-P, and for the uridyl transfer from UTP to GlcNAc-1-P, to produce UDP-GlcNAc and pyrophosphate. The sequence is that of Bifunctional protein GlmU from Methanococcus vannielii (strain ATCC 35089 / DSM 1224 / JCM 13029 / OCM 148 / SB).